The sequence spans 545 residues: Chaperonin GroEL (545 aa).

Residues 29-32 (TIGP), 86-90 (DGTTT), G413, 478-480 (NAA), and D494 each bind ATP.

Belongs to the chaperonin (HSP60) family. As to quaternary structure, forms a cylinder of 14 subunits composed of two heptameric rings stacked back-to-back. Interacts with the co-chaperonin GroES.

The protein localises to the cytoplasm. The enzyme catalyses ATP + H2O + a folded polypeptide = ADP + phosphate + an unfolded polypeptide.. Its function is as follows. Together with its co-chaperonin GroES, plays an essential role in assisting protein folding. The GroEL-GroES system forms a nano-cage that allows encapsulation of the non-native substrate proteins and provides a physical environment optimized to promote and accelerate protein folding. This Exiguobacterium sibiricum (strain DSM 17290 / CCUG 55495 / CIP 109462 / JCM 13490 / 255-15) protein is Chaperonin GroEL.